A 232-amino-acid polypeptide reads, in one-letter code: 5'-methylthioadenosine/S-adenosylhomocysteine nucleosidase (232 aa).

Glu12 (proton acceptor) is an active-site residue. Residues Gly78, Ile152, and 173–174 (ME) each bind substrate. Catalysis depends on Asp197, which acts as the Proton donor.

This sequence belongs to the PNP/UDP phosphorylase family. MtnN subfamily. As to quaternary structure, homodimer.

The enzyme catalyses S-adenosyl-L-homocysteine + H2O = S-(5-deoxy-D-ribos-5-yl)-L-homocysteine + adenine. It catalyses the reaction S-methyl-5'-thioadenosine + H2O = 5-(methylsulfanyl)-D-ribose + adenine. The catalysed reaction is 5'-deoxyadenosine + H2O = 5-deoxy-D-ribose + adenine. It participates in amino-acid biosynthesis; L-methionine biosynthesis via salvage pathway; S-methyl-5-thio-alpha-D-ribose 1-phosphate from S-methyl-5'-thioadenosine (hydrolase route): step 1/2. Functionally, catalyzes the irreversible cleavage of the glycosidic bond in both 5'-methylthioadenosine (MTA) and S-adenosylhomocysteine (SAH/AdoHcy) to adenine and the corresponding thioribose, 5'-methylthioribose and S-ribosylhomocysteine, respectively. Also cleaves 5'-deoxyadenosine, a toxic by-product of radical S-adenosylmethionine (SAM) enzymes, into 5-deoxyribose and adenine. Thus, is required for in vivo function of the radical SAM enzymes biotin synthase and lipoic acid synthase, that are inhibited by 5'-deoxyadenosine accumulation. The chain is 5'-methylthioadenosine/S-adenosylhomocysteine nucleosidase from Enterobacter sp. (strain 638).